The chain runs to 415 residues: MHLLCFLSLACSLLAAALIPGPREAPATVAAFESGLGFSEAEPDGGEVKGFEGKDLEEQLRSVSSVDELMSVLYPDYWKMYKCQLRKGGWQQPSLNMRTGDTVKLAAAHYNTEILKSIDNEWRKTQCMPREVCIDVGKEFGAATNTFFKPPCVSVYRCGGCCNSEGLQCMNTSTGYLSKTLFEITVPLSQGPKPVTISFANHTSCRCMSKLDVYRQVHSIIRRSLPATLPQCQAANKTCPANYVWNNYMCQCLAQQDFIFYSNVEDDSSNGFHDVCGPNKELDEDTCQCVCKGGLRPSSCGPHKELDRDSCQCVCKNKLFLNSCGANREFDENTCQCVCKRTCPRNQPLNPGKCACECTENTQKCFLKGKKFHHQTCSCYRRPCTNRLKHCDPGLSFSEEVCRCVPSYWKRPHLN.

The first 31 residues, 1–31 (MHLLCFLSLACSLLAAALIPGPREAPATVAA), serve as a signal peptide directing secretion. A propeptide spanning residues 32–107 (FESGLGFSEA…RTGDTVKLAA (76 aa)) is cleaved from the precursor. 3 disulfides stabilise this stretch: Cys-127–Cys-169, Cys-158–Cys-205, and Cys-162–Cys-207. N-linked (GlcNAc...) asparagine glycosylation is found at Asn-171, Asn-201, and Asn-236. A propeptide spanning residues 224–415 (SLPATLPQCQ…PSYWKRPHLN (192 aa)) is cleaved from the precursor. 4 tandem repeats follow at residues 276–291 (CGPNKELDEDTCQCVC), 300–315 (CGPHKELDRDSCQCVC), 324–339 (CGANREFDENTCQCVC), and 343–358 (CPRNQPLNPGKCACEC). The tract at residues 276–358 (CGPNKELDED…LNPGKCACEC (83 aa)) is 4 X 16 AA repeats of C-X(10)-C-X-C-X(1,3)-C.

Belongs to the PDGF/VEGF growth factor family. As to quaternary structure, homodimer; non-covalent and antiparallel. Interacts with FLT4/VEGFR3; the interaction is required for FLT4/VEGFR3 homodimarization and activation. In terms of processing, undergoes a complex proteolytic maturation which generates a variety of processed secreted forms with increased activity toward VEGFR-3, but only the fully processed form could activate VEGFR-2. VEGF-C first form an antiparallel homodimer linked by disulfide bonds. Before secretion, a cleavage occurs between Arg-223 and Ser-224 producing a heterotetramer. The next extracellular step of the processing removes the N-terminal propeptide. Finally the mature VEGF-C is composed mostly of two VEGF homology domains (VHDs) bound by non-covalent interactions. Highly expressed in the lung, ovary, preputial gland and the adrenal gland. Expressed in the post-pubertal mammary glands.

The protein localises to the secreted. In terms of biological role, growth factor active in angiogenesis, and endothelial cell growth, stimulating their proliferation and migration and also has effects on the permeability of blood vessels. May function in angiogenesis of the venous and lymphatic vascular systems during embryogenesis, and also in the maintenance of differentiated lymphatic endothelium in adults. Binds and activates KDR/VEGFR2 and FLT4/VEGFR3 receptors. This chain is Vascular endothelial growth factor C (Vegfc), found in Rattus norvegicus (Rat).